A 566-amino-acid polypeptide reads, in one-letter code: Putative ABC transporter ATP-binding protein lp_0149 (566 aa).

2 consecutive ABC transporter domains span residues isoleucine 6–glutamate 247 and leucine 302–alanine 536. Residues glycine 40–serine 47 and glycine 335–serine 342 contribute to the ATP site.

This sequence belongs to the ABC transporter superfamily.

Its subcellular location is the cell membrane. Probably part of an ABC transporter complex. Responsible for energy coupling to the transport system. The polypeptide is Putative ABC transporter ATP-binding protein lp_0149 (Lactiplantibacillus plantarum (strain ATCC BAA-793 / NCIMB 8826 / WCFS1) (Lactobacillus plantarum)).